The following is a 96-amino-acid chain: Nucleoid-associated protein CF0672 (96 aa).

This sequence belongs to the YbaB/EbfC family. As to quaternary structure, homodimer.

The protein localises to the cytoplasm. It localises to the nucleoid. Functionally, binds to DNA and alters its conformation. May be involved in regulation of gene expression, nucleoid organization and DNA protection. This chain is Nucleoid-associated protein CF0672, found in Chlamydia felis (strain Fe/C-56) (Chlamydophila felis).